Consider the following 306-residue polypeptide: Ornithine carbamoyltransferase (306 aa).

Carbamoyl phosphate-binding positions include 54 to 57 (STRT), Gln81, Arg105, and 132 to 135 (HPLQ). L-ornithine is bound by residues Asn162, Asp226, and 230 to 231 (SM). Residues 266-267 (CL) and Arg294 each bind carbamoyl phosphate.

This sequence belongs to the aspartate/ornithine carbamoyltransferase superfamily. OTCase family.

The protein localises to the cytoplasm. The enzyme catalyses carbamoyl phosphate + L-ornithine = L-citrulline + phosphate + H(+). Its pathway is amino-acid biosynthesis; L-arginine biosynthesis; L-arginine from L-ornithine and carbamoyl phosphate: step 1/3. Its function is as follows. Reversibly catalyzes the transfer of the carbamoyl group from carbamoyl phosphate (CP) to the N(epsilon) atom of ornithine (ORN) to produce L-citrulline. The protein is Ornithine carbamoyltransferase of Sulfurisphaera tokodaii (strain DSM 16993 / JCM 10545 / NBRC 100140 / 7) (Sulfolobus tokodaii).